The chain runs to 1363 residues: Xanthine dehydrogenase (1363 aa).

In terms of domain architecture, 2Fe-2S ferredoxin-type spans 35 to 121 (DTIRFYLNGT…GKHVITVEGI (87 aa)). The [2Fe-2S] cluster site is built by Cys-73, Cys-78, Cys-81, Cys-103, Cys-142, Cys-145, Cys-177, and Cys-179. In terms of domain architecture, FAD-binding PCMH-type spans 266–450 (FGNKRKKWYR…SSLRIPTASE (185 aa)). Residues 294-301 (LIGGSTET), Phe-374, 384-388 (SPAGN), Asp-397, and Lys-459 contribute to the FAD site. Residues Gln-798 and Phe-829 each contribute to the Mo-molybdopterin site. Residues Glu-833 and Arg-911 each coordinate substrate. Arg-943 is a Mo-molybdopterin binding site. Substrate is bound by residues Phe-945 and Thr-1041. A Mo-molybdopterin-binding site is contributed by Ala-1110. Glu-1295 serves as the catalytic Proton acceptor.

The protein belongs to the xanthine dehydrogenase family. Requires FAD as cofactor. Mo-molybdopterin is required as a cofactor. [2Fe-2S] cluster serves as cofactor.

The protein resides in the peroxisome. The enzyme catalyses xanthine + NAD(+) + H2O = urate + NADH + H(+). The catalysed reaction is hypoxanthine + NAD(+) + H2O = xanthine + NADH + H(+). Key enzyme in purine degradation. Catalyzes the oxidation of hypoxanthine to xanthine. Catalyzes the oxidation of xanthine to uric acid. This chain is Xanthine dehydrogenase (hxA), found in Emericella nidulans (strain FGSC A4 / ATCC 38163 / CBS 112.46 / NRRL 194 / M139) (Aspergillus nidulans).